Here is a 658-residue protein sequence, read N- to C-terminus: Structure-specific endonuclease subunit SLX1 (658 aa).

Positions 12-92 (PFYACYFLRS…AKPHLSRHLK (81 aa)) constitute a GIY-YIG domain. Disordered regions lie at residues 29–52 (YIGS…QGAY), 239–269 (GVAE…ETLP), 288–328 (PIPQ…NGVD), and 594–658 (TTSR…IDLT). Composition is skewed to basic and acidic residues over residues 308 to 324 (KLSD…HDAE) and 627 to 640 (SKID…DTKK). Residues 641 to 652 (NTTQKAKSNETS) show a composition bias toward polar residues.

It belongs to the SLX1 family. Forms a heterodimer with SLX4. A divalent metal cation is required as a cofactor.

It is found in the nucleus. Its function is as follows. Catalytic subunit of the SLX1-SLX4 structure-specific endonuclease that resolves DNA secondary structures generated during DNA repair and recombination. Has endonuclease activity towards branched DNA substrates, introducing single-strand cuts in duplex DNA close to junctions with ss-DNA. The protein is Structure-specific endonuclease subunit SLX1 of Mycosarcoma maydis (Corn smut fungus).